Consider the following 125-residue polypeptide: C-X-C motif chemokine 9 (125 aa).

The signal sequence occupies residues 1 to 22; the sequence is MKKSGVLFLLGIILLVLIGVQG. Cystine bridges form between Cys-31–Cys-58 and Cys-33–Cys-74. Residues 93 to 125 are disordered; the sequence is VSQKKKQKNGKKHQKKKVLKVRKSQRSRQKKTT. Over residues 94 to 125 the composition is skewed to basic residues; sequence SQKKKQKNGKKHQKKKVLKVRKSQRSRQKKTT.

It belongs to the intercrine alpha (chemokine CxC) family.

It localises to the secreted. Functionally, cytokine that affects the growth, movement, or activation state of cells that participate in immune and inflammatory response. Chemotactic for activated T-cells. Binds to CXCR3. This Homo sapiens (Human) protein is C-X-C motif chemokine 9 (CXCL9).